The following is a 673-amino-acid chain: UvrABC system protein B (673 aa).

Residues A26 to R414 enclose the Helicase ATP-binding domain. ATP is bound at residue G39–T46. The Beta-hairpin signature appears at Y92 to I115. Residues Q431–M597 form the Helicase C-terminal domain. The segment at R601 to Y626 is disordered. Residues A635–A670 enclose the UVR domain.

Belongs to the UvrB family. Forms a heterotetramer with UvrA during the search for lesions. Interacts with UvrC in an incision complex.

The protein localises to the cytoplasm. In terms of biological role, the UvrABC repair system catalyzes the recognition and processing of DNA lesions. A damage recognition complex composed of 2 UvrA and 2 UvrB subunits scans DNA for abnormalities. Upon binding of the UvrA(2)B(2) complex to a putative damaged site, the DNA wraps around one UvrB monomer. DNA wrap is dependent on ATP binding by UvrB and probably causes local melting of the DNA helix, facilitating insertion of UvrB beta-hairpin between the DNA strands. Then UvrB probes one DNA strand for the presence of a lesion. If a lesion is found the UvrA subunits dissociate and the UvrB-DNA preincision complex is formed. This complex is subsequently bound by UvrC and the second UvrB is released. If no lesion is found, the DNA wraps around the other UvrB subunit that will check the other stand for damage. This is UvrABC system protein B from Xanthomonas campestris pv. campestris (strain 8004).